Here is a 329-residue protein sequence, read N- to C-terminus: T-lymphocyte activation antigen CD86 (329 aa).

Residues 1-23 (MDPQCTMGLSNILFVMAFLLSGA) form the signal peptide. Over 24-247 (APLKIQAYFN…DPQPPPDHIP (224 aa)) the chain is Extracellular. N33, N47, N135, N146, N154, N177, N192, and N213 each carry an N-linked (GlcNAc...) asparagine glycan. The 99-residue stretch at 33 to 131 (NETADLPCQF…RIHQMNSELS (99 aa)) folds into the Ig-like V-type domain. C40 and C110 form a disulfide bridge. The 76-residue stretch at 150 to 225 (NVYINLTCSS…IFCILETDKT (76 aa)) folds into the Ig-like C2-type domain. C157 and C218 are oxidised to a cystine. Residues 248-268 (WITAVLPTVIICVMVFCLILW) form a helical membrane-spanning segment. Over 269 to 329 (KWKKKKRPRN…SSCDKSDTCF (61 aa)) the chain is Cytoplasmic. The tract at residues 277 to 329 (RNSYKCGTNTMEREESEQTKKREKIHIPERSDEAQRVFKSSKTSSCDKSDTCF) is disordered. Residues 287 to 312 (MEREESEQTKKREKIHIPERSDEAQR) are compositionally biased toward basic and acidic residues.

Homodimer. Interacts with MARCH8. Interacts (via cytoplasmic domain) with PHB1 and PHB2; the interactions increases after priming with CD40. Interacts with CD28. As to quaternary structure, (Microbial infection) Interacts with adenovirus subgroup b fiber protein. In terms of assembly, (Microbial infection) Interacts with Orthopoxvirus OPG038/M2 protein, inhibiting the interaction with CTLA4 and CD28. In terms of processing, polyubiquitinated; which is promoted by MARCH8 and results in endocytosis and lysosomal degradation. As to expression, expressed by activated B-lymphocytes and monocytes.

It localises to the cell membrane. Functionally, receptor involved in the costimulatory signal essential for T-lymphocyte proliferation and interleukin-2 production, by binding CD28 or CTLA-4. May play a critical role in the early events of T-cell activation and costimulation of naive T-cells, such as deciding between immunity and anergy that is made by T-cells within 24 hours after activation. Also involved in the regulation of B cells function, plays a role in regulating the level of IgG(1) produced. Upon CD40 engagement, activates NF-kappa-B signaling pathway via phospholipase C and protein kinase C activation. Its function is as follows. Interferes with the formation of CD86 clusters, and thus acts as a negative regulator of T-cell activation. In terms of biological role, (Microbial infection) Acts as a receptor for adenovirus subgroup B. This is T-lymphocyte activation antigen CD86 (CD86) from Homo sapiens (Human).